Here is a 304-residue protein sequence, read N- to C-terminus: Homoserine O-succinyltransferase (304 aa).

Cys-142 acts as the Acyl-thioester intermediate in catalysis. The substrate site is built by Lys-163 and Ser-192. His-235 acts as the Proton acceptor in catalysis. The active site involves Glu-237. Arg-249 lines the substrate pocket.

This sequence belongs to the MetA family.

The protein localises to the cytoplasm. The enzyme catalyses L-homoserine + succinyl-CoA = O-succinyl-L-homoserine + CoA. Its pathway is amino-acid biosynthesis; L-methionine biosynthesis via de novo pathway; O-succinyl-L-homoserine from L-homoserine: step 1/1. In terms of biological role, transfers a succinyl group from succinyl-CoA to L-homoserine, forming succinyl-L-homoserine. This is Homoserine O-succinyltransferase from Blochmanniella pennsylvanica (strain BPEN).